Reading from the N-terminus, the 248-residue chain is tRNA uridine(34) hydroxylase (248 aa).

Residues 127–221 form the Rhodanese domain; that stretch reads RGRPLVLLDT…YFEEVGGEGY (95 aa). Cys181 functions as the Cysteine persulfide intermediate in the catalytic mechanism.

It belongs to the TrhO family.

The enzyme catalyses uridine(34) in tRNA + AH2 + O2 = 5-hydroxyuridine(34) in tRNA + A + H2O. Catalyzes oxygen-dependent 5-hydroxyuridine (ho5U) modification at position 34 in tRNAs. The chain is tRNA uridine(34) hydroxylase from Xanthomonas euvesicatoria pv. vesicatoria (strain 85-10) (Xanthomonas campestris pv. vesicatoria).